A 436-amino-acid polypeptide reads, in one-letter code: Protein VHS2 (436 aa).

The tract at residues 1 to 34 (MDTSNHNQDHDSHVAAQRENDNNYMPPSPSMSES) is disordered. The span at 7–21 (NQDHDSHVAAQREND) shows a compositional bias: basic and acidic residues. Residues serine 53, serine 61, serine 102, and serine 172 each carry the phosphoserine modification. 4 disordered regions span residues 165 to 195 (RALG…DHGS), 211 to 266 (NNNN…HMNF), 282 to 360 (NNAN…EEDN), and 389 to 436 (NDNH…DTTK). Residues 171–183 (RSLSSQSFDNETS) are compositionally biased toward polar residues. 3 stretches are compositionally biased toward low complexity: residues 211 to 226 (NNNN…STAN), 238 to 261 (SFSS…ASPP), and 282 to 299 (NNAN…AALS). Serine 299, serine 301, serine 303, and serine 325 each carry phosphoserine. Polar residues predominate over residues 300 to 312 (RSPSNQQYLLKQQ). Residues 401–436 (TINNNIKNSPAFTNSNPSSKSNSNSTITSMNPDTTK) show a composition bias toward low complexity.

It to yeast MFL3.

It localises to the cytoplasm. In terms of biological role, can suppress the synthetic lethality of the hal3 sit4 double mutation when overexpressed, suggesting that it is involved in the G1-S transition. In Saccharomyces cerevisiae (strain ATCC 204508 / S288c) (Baker's yeast), this protein is Protein VHS2 (VHS2).